An 823-amino-acid polypeptide reads, in one-letter code: NAD-dependent histone deacetylase sirtuin-1 (823 aa).

Positions L41–A67 are enriched in low complexity. Positions L41 to E146 are disordered. A compositionally biased stretch (basic and acidic residues) spans G72–T95. Residues E104–S137 show a composition bias toward acidic residues. A Deacetylase sirtuin-type domain is found at K204–E499. NAD(+)-binding positions include G229–Y248 and Q313–D316. The active-site Proton acceptor is the H331. Zn(2+)-binding residues include C339, C342, C363, and C366. Residues G427–S429, N452–E454, and S469 each bind NAD(+). S618 and S621 each carry phosphoserine. The span at D698–E707 shows a compositional bias: acidic residues. Disordered regions lie at residues D698 to G722 and I777 to V823. A compositionally biased stretch (basic and acidic residues) spans P798–E813. Residues S814–V823 show a composition bias toward pro residues.

This sequence belongs to the sirtuin family. Class I subfamily. In terms of assembly, interacts with the transcriptional repressors hairy (hry) and deadpan (dpn); via basic domains. Associates with the Esc/E(z) histone methyltransferase complex. Interacts directly with E(z) and HDAC1/Rpd3. Requires Zn(2+) as cofactor.

The protein resides in the cytoplasm. Its subcellular location is the nucleus. The protein localises to the chromosome. It catalyses the reaction N(6)-acetyl-L-lysyl-[protein] + NAD(+) + H2O = 2''-O-acetyl-ADP-D-ribose + nicotinamide + L-lysyl-[protein]. NAD-dependent histone deacetylase involved in heterochromatic silencing. Mildly suppresses the heterochromatin-mediated silencing phenomenon known as position-effect variegation (PEV). Required for epigenetic silencing of the polycomb group proteins. Has histone H4 deacetylase activity in vitro. Required maternally for establishing proper segmentation of the embryo. Involved in sex determination. May be involved in the regulation of life span. This Drosophila melanogaster (Fruit fly) protein is NAD-dependent histone deacetylase sirtuin-1.